The primary structure comprises 552 residues: Two-component response regulator ARR10 (552 aa).

Positions 18–133 constitute a Response regulatory domain; sequence RVLAVDDDQT…ELKNIWQHVV (116 aa). Position 69 is a 4-aspartylphosphate (aspartate 69). Residues 139–181 form a disordered region; that stretch reads KKNKSNVSNGSGNCDKANRKRKEQYEEEEEEERGNDNDDPTAQ. Positions 151–173 form a coiled coil; sequence NCDKANRKRKEQYEEEEEEERGN. Positions 163 to 177 are enriched in acidic residues; the sequence is YEEEEEEERGNDNDD. A Nuclear localization signal motif is present at residues 182-185; it reads KKPR. The myb-like GARP DNA-binding region spans 185–235; that stretch reads RVLWTHELHNKFLAAVDHLGVERAVPKKILDLMNVDKLTRENVASHLQKFR.

Belongs to the ARR family. Type-B subfamily. Binds the target DNA as a monomer. Post-translationally, two-component system major event consists of a His-to-Asp phosphorelay between a sensor histidine kinase (HK) and a response regulator (RR). In plants, the His-to-Asp phosphorelay involves an additional intermediate named Histidine-containing phosphotransfer protein (HPt). This multistep phosphorelay consists of a His-Asp-His-Asp sequential transfer of a phosphate group between first a His and an Asp of the HK protein, followed by the transfer to a conserved His of the HPt protein and finally the transfer to an Asp in the receiver domain of the RR protein. As to expression, detected in the whole plant. Predominantly expressed in roots and leaves.

The protein localises to the nucleus. Functionally, transcriptional activator that binds specifically to the DNA sequence 5'-[AG]GATT-3'. Functions as a response regulator involved in His-to-Asp phosphorelay signal transduction system. Phosphorylation of the Asp residue in the receiver domain activates the ability of the protein to promote the transcription of target genes. Could directly activate some type-A response regulators in response to cytokinins. The protein is Two-component response regulator ARR10 (ARR10) of Arabidopsis thaliana (Mouse-ear cress).